Reading from the N-terminus, the 163-residue chain is Large ribosomal subunit protein uL10 (163 aa).

This sequence belongs to the universal ribosomal protein uL10 family. Part of the ribosomal stalk of the 50S ribosomal subunit. The N-terminus interacts with L11 and the large rRNA to form the base of the stalk. The C-terminus forms an elongated spine to which L12 dimers bind in a sequential fashion forming a multimeric L10(L12)X complex.

Forms part of the ribosomal stalk, playing a central role in the interaction of the ribosome with GTP-bound translation factors. This chain is Large ribosomal subunit protein uL10, found in Actinobacillus succinogenes (strain ATCC 55618 / DSM 22257 / CCUG 43843 / 130Z).